Consider the following 215-residue polypeptide: NADH-quinone oxidoreductase subunit C (215 aa).

The protein belongs to the complex I 30 kDa subunit family. NDH-1 is composed of 14 different subunits. Subunits NuoB, C, D, E, F, and G constitute the peripheral sector of the complex.

The protein resides in the cell inner membrane. It carries out the reaction a quinone + NADH + 5 H(+)(in) = a quinol + NAD(+) + 4 H(+)(out). Its function is as follows. NDH-1 shuttles electrons from NADH, via FMN and iron-sulfur (Fe-S) centers, to quinones in the respiratory chain. The immediate electron acceptor for the enzyme in this species is believed to be ubiquinone. Couples the redox reaction to proton translocation (for every two electrons transferred, four hydrogen ions are translocated across the cytoplasmic membrane), and thus conserves the redox energy in a proton gradient. The protein is NADH-quinone oxidoreductase subunit C of Dinoroseobacter shibae (strain DSM 16493 / NCIMB 14021 / DFL 12).